Here is a 97-residue protein sequence, read N- to C-terminus: Large ribosomal subunit protein uL23 (97 aa).

It belongs to the universal ribosomal protein uL23 family. Part of the 50S ribosomal subunit. Contacts protein L29, and trigger factor when it is bound to the ribosome.

In terms of biological role, one of the early assembly proteins it binds 23S rRNA. One of the proteins that surrounds the polypeptide exit tunnel on the outside of the ribosome. Forms the main docking site for trigger factor binding to the ribosome. This chain is Large ribosomal subunit protein uL23, found in Anaeromyxobacter dehalogenans (strain 2CP-1 / ATCC BAA-258).